Consider the following 156-residue polypeptide: Small ribosomal subunit protein uS7 (156 aa).

This sequence belongs to the universal ribosomal protein uS7 family. Part of the 30S ribosomal subunit. Contacts proteins S9 and S11.

Functionally, one of the primary rRNA binding proteins, it binds directly to 16S rRNA where it nucleates assembly of the head domain of the 30S subunit. Is located at the subunit interface close to the decoding center, probably blocks exit of the E-site tRNA. The chain is Small ribosomal subunit protein uS7 from Vibrio campbellii (strain ATCC BAA-1116).